We begin with the raw amino-acid sequence, 495 residues long: Solute carrier family 2, facilitated glucose transporter member 3 (495 aa).

Residues 1–10 lie on the Cytoplasmic side of the membrane; that stretch reads MGTQKVTVSL. A helical membrane pass occupies residues 11-32; sequence IFALSIATIGSFQFGYNTGVIN. At 33–64 the chain is on the extracellular side; it reads APETIIKDFLNYTLEEKSENLPTEVLLTSLWS. An N-linked (GlcNAc...) asparagine glycan is attached at Asn-43. A helical membrane pass occupies residues 65 to 85; sequence LSVAIFSVGGMIGSFSVGLFV. The Cytoplasmic segment spans residues 86 to 90; sequence NRFGR. A helical membrane pass occupies residues 91–111; it reads RNSMLMVNLLAVAGGCLMGFC. The Extracellular portion of the chain corresponds to 112 to 118; the sequence is KIAQSVE. A helical membrane pass occupies residues 119–142; it reads MLILGRLIIGLFCGLCTGFVPMYI. Topologically, residues 143–153 are cytoplasmic; sequence GEISPTALRGA. Residues 154–174 traverse the membrane as a helical segment; that stretch reads FGTLNQLGIVIGILVAQIFGL. Gln-159 contributes to the D-glucose binding site. Residues 175-183 are Extracellular-facing; sequence KVIMGTEEL. A helical transmembrane segment spans residues 184 to 204; that stretch reads WPLLLGFTIIPAVLQSAALPF. Residues 205–269 are Cytoplasmic-facing; that stretch reads CPESPRFLLI…LFRSRSYRQP (65 aa). Thr-232 carries the post-translational modification Phosphothreonine. The helical transmembrane segment at 270–290 threads the bilayer; it reads IIISIMLQLSQQLSGINAVFY. Residues 277–279 form an important for selectivity against fructose region; it reads QLS. Residues 280–281 and Asn-286 contribute to the D-glucose site; that span reads QQ. Over 291-304 the chain is Extracellular; that stretch reads YSTGIFKDAGVEEP. The chain crosses the membrane as a helical span at residues 305 to 325; sequence IYATIGAGVVNTIFTVVSLFL. Asn-315 provides a ligand contact to D-glucose. The Cytoplasmic portion of the chain corresponds to 326–331; that stretch reads VERAGR. Residues 332–352 traverse the membrane as a helical segment; sequence RTLHMIGLGGMAVCSILMTIS. Residues 353–363 are Extracellular-facing; the sequence is LLLKDNYNWMS. A helical membrane pass occupies residues 364–389; it reads FVCIGAILVFVAFFEIGPGPIPWFIV. 2 residues coordinate D-glucose: Glu-378 and Trp-386. Residues 390 to 399 lie on the Cytoplasmic side of the membrane; it reads AELFSQGPRP. The helical transmembrane segment at 400 to 420 threads the bilayer; the sequence is AAMAVAGCSNWTSNFLVGLLF. Residues 421–429 lie on the Extracellular side of the membrane; the sequence is PSAAFYLGA. A helical transmembrane segment spans residues 430 to 450; it reads YVFIIFTGFLIVFLVFTFFKV. Residues 451 to 495 are Cytoplasmic-facing; sequence PETRGRTFEEITRAFEGQGQDANRAEKGPIVEMNSMQPVKETATV. Phosphoserine is present on Ser-485. Thr-492 carries the phosphothreonine modification.

This sequence belongs to the major facilitator superfamily. Sugar transporter (TC 2.A.1.1) family. Glucose transporter subfamily. In terms of assembly, interacts with SMIM43; the interaction may promote SLC2A3-mediated glucose transport to meet the energy needs of mesendoderm differentiation.

It is found in the cell membrane. It localises to the perikaryon. The protein localises to the cell projection. The enzyme catalyses D-glucose(out) = D-glucose(in). It carries out the reaction D-galactose(in) = D-galactose(out). Deoxyglucose transport is inhibited by D-glucose, D-galactose and maltose. Galactose transport is inhibited by D-glucose and maltose. Functionally, facilitative glucose transporter. Can also mediate the uptake of various other monosaccharides across the cell membrane. Mediates the uptake of glucose, 2-deoxyglucose, galactose, mannose, xylose and fucose, and probably also dehydroascorbate. Does not mediate fructose transport. Required for mesendoderm differentiation. In Canis lupus familiaris (Dog), this protein is Solute carrier family 2, facilitated glucose transporter member 3.